The chain runs to 97 residues: MASTLCCIAPLIYLVFGVSSTWLIGLGEYDYLRIPMLIISLCAFAYGFWLLMFSKKIICSKYISRKKLIVLYWIVFIVMIFFLTYPTILPWILELAN.

3 helical membrane-spanning segments follow: residues 7 to 27, 34 to 54, and 69 to 89; these read CIAP…IGLG, IPML…LMFS, and IVLY…PTIL.

It localises to the cell membrane. This is an uncharacterized protein from Haemophilus influenzae (strain ATCC 51907 / DSM 11121 / KW20 / Rd).